The sequence spans 256 residues: Pimeloyl-[acyl-carrier protein] methyl ester esterase (256 aa).

Residues 17-241 (VYLIHGWGAN…KAAHAPFLSH (225 aa)) form the AB hydrolase-1 domain. Residues tryptophan 23, 83–84 (SL), and 145–149 (FLQLQ) contribute to the substrate site. Serine 83 serves as the catalytic Nucleophile. Residues aspartate 207 and histidine 235 contribute to the active site. Histidine 235 is a substrate binding site.

This sequence belongs to the AB hydrolase superfamily. Carboxylesterase BioH family. In terms of assembly, monomer.

It localises to the cytoplasm. The enzyme catalyses 6-carboxyhexanoyl-[ACP] methyl ester + H2O = 6-carboxyhexanoyl-[ACP] + methanol + H(+). It participates in cofactor biosynthesis; biotin biosynthesis. The physiological role of BioH is to remove the methyl group introduced by BioC when the pimeloyl moiety is complete. It allows to synthesize pimeloyl-ACP via the fatty acid synthetic pathway through the hydrolysis of the ester bonds of pimeloyl-ACP esters. The polypeptide is Pimeloyl-[acyl-carrier protein] methyl ester esterase (Neisseria meningitidis serogroup C / serotype 2a (strain ATCC 700532 / DSM 15464 / FAM18)).